Consider the following 384-residue polypeptide: MTLRFKSRIEQALNEREHSRLTRRLQLLDRSAQGELIQQDRTYLNFSSNDYLGLANDAELVQAWQTGLARFGAGSGASPMVTGFSSAHAELEHELCHWLGYERAVLFSSGFSANQALLFTLLEKEDLLLQDKLNHASLMEAGMLSPATMKRFKHNDTEHLRQLLHEQSNSLVVTEGVFSMDGDCAPLAQIATLVKQRAWLMVDDAHGIGVLGEDGAGSCQAAGIHPEILVVTFGKAFGLAGAAVLCDAHVGDYLTQFARHHVYSTAMPPAQAHALTHAARMIQSQSWRREQLAELLACFDEQCRNIPGFVATQTPIKPWLLGSSDSALSASHELKQQGIWVSAIRPPTVPVGSARLRITITAAHTQAQIRRLSEQLKHVMEKDT.

Arginine 23 contacts substrate. A pyridoxal 5'-phosphate-binding site is contributed by 110-111 (GF). Substrate is bound at residue histidine 135. Serine 179, histidine 206, and threonine 232 together coordinate pyridoxal 5'-phosphate. Lysine 235 carries the N6-(pyridoxal phosphate)lysine modification. Threonine 348 is a binding site for substrate.

The protein belongs to the class-II pyridoxal-phosphate-dependent aminotransferase family. BioF subfamily. In terms of assembly, homodimer. The cofactor is pyridoxal 5'-phosphate.

The enzyme catalyses 6-carboxyhexanoyl-[ACP] + L-alanine + H(+) = (8S)-8-amino-7-oxononanoate + holo-[ACP] + CO2. The protein operates within cofactor biosynthesis; biotin biosynthesis. In terms of biological role, catalyzes the decarboxylative condensation of pimeloyl-[acyl-carrier protein] and L-alanine to produce 8-amino-7-oxononanoate (AON), [acyl-carrier protein], and carbon dioxide. This chain is 8-amino-7-oxononanoate synthase, found in Vibrio cholerae serotype O1 (strain ATCC 39315 / El Tor Inaba N16961).